Here is a 503-residue protein sequence, read N- to C-terminus: Putative FBD-associated F-box protein At5g56410 (503 aa).

The F-box domain maps to Asp2–Asp50. One can recognise an FBD domain in the interval Phe361–Ile412.

The sequence is that of Putative FBD-associated F-box protein At5g56410 from Arabidopsis thaliana (Mouse-ear cress).